Consider the following 393-residue polypeptide: NAD(P)H-quinone oxidoreductase subunit H, chloroplastic (393 aa).

The protein belongs to the complex I 49 kDa subunit family. NDH is composed of at least 16 different subunits, 5 of which are encoded in the nucleus. Interacts with the chaperonin CNP60B4 subunit.

The protein resides in the plastid. It is found in the chloroplast thylakoid membrane. It catalyses the reaction a plastoquinone + NADH + (n+1) H(+)(in) = a plastoquinol + NAD(+) + n H(+)(out). The catalysed reaction is a plastoquinone + NADPH + (n+1) H(+)(in) = a plastoquinol + NADP(+) + n H(+)(out). Its function is as follows. NDH shuttles electrons from NAD(P)H:plastoquinone, via FMN and iron-sulfur (Fe-S) centers, to quinones in the photosynthetic chain and possibly in a chloroplast respiratory chain. The immediate electron acceptor for the enzyme in this species is believed to be plastoquinone. Couples the redox reaction to proton translocation, and thus conserves the redox energy in a proton gradient. This chain is NAD(P)H-quinone oxidoreductase subunit H, chloroplastic, found in Arabidopsis thaliana (Mouse-ear cress).